The primary structure comprises 423 residues: CinA-like protein (423 aa).

The protein belongs to the CinA family.

This Synechococcus sp. (strain CC9311) protein is CinA-like protein.